We begin with the raw amino-acid sequence, 491 residues long: Fatty acyl-CoA reductase 1 (491 aa).

The protein belongs to the fatty acyl-CoA reductase family. In terms of tissue distribution, expressed in the endodermal cell layer surrounding the central vasculature in roots. Expressed in the hilum region of seeds. Expressed in lateral root tips, cotyledons, the shoot apex, young leaves, petals, stamen filaments, and receptacle of siliques.

It carries out the reaction a long-chain fatty acyl-CoA + 2 NADPH + 2 H(+) = a long-chain primary fatty alcohol + 2 NADP(+) + CoA. Its function is as follows. Catalyzes the reduction of fatty acyl-CoA to fatty alcohols. Catalyzes specifically the formation of C18:0 and C22:0 fatty alcohols. Provides the fatty alcohols required for synthesis of suberin in roots, seed coat and wound-induced leaf tissue. Provides the fatty alcohols required for synthesis of alkyl hydroxycinnamates in root waxes. This chain is Fatty acyl-CoA reductase 1, found in Arabidopsis thaliana (Mouse-ear cress).